Reading from the N-terminus, the 218-residue chain is Oxygen regulatory protein NreC (218 aa).

The Response regulatory domain maps to 2–119; it reads KIVIADDHAV…QLILAVRTVY (118 aa). 4-aspartylphosphate is present on Asp53. In terms of domain architecture, HTH luxR-type spans 149–214; sequence SSDPFKILSK…ELVEYALKKK (66 aa). Positions 173 to 192 form a DNA-binding region, H-T-H motif; the sequence is NKDIAEKLFVSVKTVEAHKT.

Post-translationally, phosphorylated by NreB.

It is found in the cytoplasm. Its function is as follows. Member of the two-component regulatory system NreB/NreC involved in the control of dissimilatory nitrate/nitrite reduction in response to oxygen. Phosphorylated NreC binds to a GC-rich palindromic sequence at the promoters of the nitrate (narGHJI) and nitrite (nir) reductase operons, as well as the putative nitrate transporter gene narT, and activates their expression. In Staphylococcus epidermidis (strain ATCC 12228 / FDA PCI 1200), this protein is Oxygen regulatory protein NreC (nreC).